The following is a 103-amino-acid chain: uncharacterized protein (103 aa).

Residues 37 to 57 (FILLSSLLIGGLLITIACYHI) traverse the membrane as a helical segment.

It localises to the membrane. This is an uncharacterized protein from Saccharomyces cerevisiae (strain ATCC 204508 / S288c) (Baker's yeast).